The following is a 367-amino-acid chain: Tetraacyldisaccharide 4'-kinase (367 aa).

68-75 serves as a coordination point for ATP; sequence VLGGSGKT.

Belongs to the LpxK family.

It catalyses the reaction a lipid A disaccharide + ATP = a lipid IVA + ADP + H(+). The protein operates within glycolipid biosynthesis; lipid IV(A) biosynthesis; lipid IV(A) from (3R)-3-hydroxytetradecanoyl-[acyl-carrier-protein] and UDP-N-acetyl-alpha-D-glucosamine: step 6/6. Functionally, transfers the gamma-phosphate of ATP to the 4'-position of a tetraacyldisaccharide 1-phosphate intermediate (termed DS-1-P) to form tetraacyldisaccharide 1,4'-bis-phosphate (lipid IVA). In Chlamydia abortus (strain DSM 27085 / S26/3) (Chlamydophila abortus), this protein is Tetraacyldisaccharide 4'-kinase.